Here is a 407-residue protein sequence, read N- to C-terminus: Peptidase T (407 aa).

Histidine 81 lines the Zn(2+) pocket. Aspartate 83 is an active-site residue. Position 142 (aspartate 142) interacts with Zn(2+). The active-site Proton acceptor is glutamate 176. Residues glutamate 177, aspartate 199, and histidine 381 each contribute to the Zn(2+) site.

Belongs to the peptidase M20B family. Zn(2+) is required as a cofactor.

Its subcellular location is the cytoplasm. The enzyme catalyses Release of the N-terminal residue from a tripeptide.. Cleaves the N-terminal amino acid of tripeptides. The chain is Peptidase T from Streptococcus pneumoniae (strain Taiwan19F-14).